We begin with the raw amino-acid sequence, 228 residues long: uncharacterized protein (228 aa).

This is an uncharacterized protein from Acidianus ambivalens (Desulfurolobus ambivalens).